Here is a 46-residue protein sequence, read N- to C-terminus: Iota-conotoxin-like r11b (46 aa).

Residues P2 and P11 each carry the 4-hydroxyproline modification. Cystine bridges form between C5/C19, C12/C22, C18/C27, and C21/C38. 4-hydroxyproline is present on P29. F44 is modified (D-phenylalanine).

In terms of processing, the natural D-Phe form of the peptide is more potent than the synthetic L-Phe form. Expressed by the venom duct.

It localises to the secreted. Functionally, iota-conotoxins bind to voltage-gated sodium channels (Nav) and act as agonists by shifting the voltage-dependence of activation to more hyperpolarized levels. Produces excitatory symptoms when injected intracranially into mice and is lethal at higher doses. Exposure to frog cutaneous pectoris induces spontaneous and repetitive action potentials. This effect is slowly reversible. Natural peptide (with D-Phe) is active on nerve, but not on muscle. Synthetic peptide (with L-Phe) is not active on both nerve and muscle. In Conus radiatus (Rayed cone), this protein is Iota-conotoxin-like r11b.